We begin with the raw amino-acid sequence, 233 residues long: uncharacterized protein (233 aa).

This sequence belongs to the asfivirus H233R family.

This is an uncharacterized protein from African swine fever virus (isolate Warthog/Namibia/Wart80/1980) (ASFV).